A 23-amino-acid polypeptide reads, in one-letter code: Potassium channel toxin alpha-KTx 13.1 (23 aa).

3 disulfide bridges follow: C2–C15, C5–C20, and C9–C22. The segment at 13 to 20 is interaction with Ca(2+)-activated K(+) channels; the sequence is GKCINGRC.

Expressed by the venom gland.

It localises to the secreted. Blocks reversibly Shaker B potassium channels. Also displaces binding of noxiustoxin to mouse brain synaptosome membranes. This chain is Potassium channel toxin alpha-KTx 13.1, found in Tityus obscurus (Amazonian scorpion).